The sequence spans 476 residues: Glutathione synthetase (476 aa).

Arginine 117 is a substrate binding site. Glutamate 137 serves as a coordination point for ATP. 2 residues coordinate Mg(2+): glutamate 137 and asparagine 139. Substrate-binding positions include 141–144, 211–213, glutamine 217, and 267–270; these read ISSS, ERN, and RAGY. ATP contacts are provided by residues lysine 308, 367–376, tyrosine 378, 400–403, and glutamate 426; these read KPQREGGGNN and MDKI. Position 371 (glutamate 371) interacts with Mg(2+). Arginine 452 lines the substrate pocket. ATP contacts are provided by lysine 454 and glutamate 460. 463 to 464 provides a ligand contact to substrate; the sequence is VA.

The protein belongs to the eukaryotic GSH synthase family. In terms of assembly, homodimer. Mg(2+) serves as cofactor.

It catalyses the reaction gamma-L-glutamyl-L-cysteine + glycine + ATP = glutathione + ADP + phosphate + H(+). It participates in sulfur metabolism; glutathione biosynthesis; glutathione from L-cysteine and L-glutamate: step 2/2. The chain is Glutathione synthetase (gshB) from Dictyostelium discoideum (Social amoeba).